The following is a 550-amino-acid chain: MKIKLLCISLAVLFCSSANAQKKQAKVQPSVFPQTVARPKLVVGMVIDQMRWDYLYRFYARYGNGGFKRLINEGFSAENTLIPYTPTLTACGHSSIYTGSVPAINGIIGNNWFDPQLGRDVYCVEDKSVKTVGSSSNEGLMSPKNLLVTTVTDELRMATNFRSKVISVSIKDRGAILPGGHTANGAYWYDDMTGSFISSTHYMQQLPTWVNDFNAQRLPNKYFEQDWNTLYPIETYTESTADAKPYERTFKGAKTSSFPHLFKQYANKNYSMMASMPQGNSFTLEFAKAAIPAEKLGQTGNTDFLAVSLSSTDYVGHQFGPNSIELEDTYLRLDKDLEDFFNYLDKTIGKGNYLLFLTADHGATHVPGFLRNKMPGGRLLLKVQTDLDSLIFNEFKVRCNFTIINNQVIFDTDAIKEAKADYAKIKQSTIDYLVKQDGVLNAVDIKNMGAVTIPQEIKNKIINGYNARRSGDVYIILDAGWYPTLTPGTGHAAWNPYDSHIPALFMGWGVKPGKTNKEYYMSDIAPTVSALLHIQQPSGSIGKVITDLLK.

The signal sequence occupies residues 1–20; the sequence is MKIKLLCISLAVLFCSSANA. The Zn(2+) site is built by aspartate 48 and threonine 89. Threonine 89 serves as the catalytic Phosphothreonine intermediate. Substrate is bound by residues asparagine 110 and 171 to 173; that span reads KDR. Aspartate 313, histidine 317, aspartate 360, histidine 361, and histidine 491 together coordinate Zn(2+).

Zn(2+) serves as cofactor.

It localises to the cell inner membrane. The catalysed reaction is a phosphate monoester + H2O = an alcohol + phosphate. Its activity is regulated as follows. Subject to competitive inhibition by phosphate. Inhibited by manganese. Magnesium mildly increases enzyme activity when the zinc concentration is suboptimal. Optimal activity is dependent on the presence of 0.01-2% Triton X-100. Triton X-100 at a concentration of 0.05% increases the activity about fivefold relative to that in its absence. The enzyme is even active in Triton X-100 concentrations up to 80%. 50% inhibition by 4 mM EDTA and 50% inhibition by 48 mM sodium citrate. In terms of biological role, alkaline phosphatase with broad substrate specificity. This is Alkaline phosphatase PhoV from Synechococcus elongatus (strain ATCC 33912 / PCC 7942 / FACHB-805) (Anacystis nidulans R2).